The following is a 294-amino-acid chain: Lysozyme M1 (294 aa).

The region spanning 81–294 (GVQGIDVSHW…RLLALANNTA (214 aa)) is the Ch-type lysozyme domain. Active-site residues include D86, D175, and E177. C185 and C224 are disulfide-bonded.

Belongs to the glycosyl hydrolase 25 family.

The protein resides in the secreted. It catalyses the reaction Hydrolysis of (1-&gt;4)-beta-linkages between N-acetylmuramic acid and N-acetyl-D-glucosamine residues in a peptidoglycan and between N-acetyl-D-glucosamine residues in chitodextrins.. Its function is as follows. This enzyme has both lysozyme (acetylmuramidase) and diacetylmuramidase activities. The sequence is that of Lysozyme M1 (acm) from Streptomyces globisporus.